The sequence spans 160 residues: 2-C-methyl-D-erythritol 2,4-cyclodiphosphate synthase (160 aa).

A divalent metal cation contacts are provided by D10 and H12. Residues 10 to 12 (DVH) and 36 to 37 (HS) each bind 4-CDP-2-C-methyl-D-erythritol 2-phosphate. A divalent metal cation is bound at residue H44. 4-CDP-2-C-methyl-D-erythritol 2-phosphate-binding positions include 58–60 (DIG), 63–67 (FPDTD), 102–108 (AQAPKMA), 134–137 (TTTE), F141, and R144.

The protein belongs to the IspF family. In terms of assembly, homotrimer. A divalent metal cation serves as cofactor.

The enzyme catalyses 4-CDP-2-C-methyl-D-erythritol 2-phosphate = 2-C-methyl-D-erythritol 2,4-cyclic diphosphate + CMP. Its pathway is isoprenoid biosynthesis; isopentenyl diphosphate biosynthesis via DXP pathway; isopentenyl diphosphate from 1-deoxy-D-xylulose 5-phosphate: step 4/6. In terms of biological role, involved in the biosynthesis of isopentenyl diphosphate (IPP) and dimethylallyl diphosphate (DMAPP), two major building blocks of isoprenoid compounds. Catalyzes the conversion of 4-diphosphocytidyl-2-C-methyl-D-erythritol 2-phosphate (CDP-ME2P) to 2-C-methyl-D-erythritol 2,4-cyclodiphosphate (ME-CPP) with a corresponding release of cytidine 5-monophosphate (CMP). The sequence is that of 2-C-methyl-D-erythritol 2,4-cyclodiphosphate synthase from Shewanella denitrificans (strain OS217 / ATCC BAA-1090 / DSM 15013).